We begin with the raw amino-acid sequence, 699 residues long: tRNA(Met) cytidine acetyltransferase TmcA (699 aa).

Residues Gln-178, 200–209 (GRGKSTLAGM), and Arg-322 contribute to the ATP site. One can recognise an N-acetyltransferase domain in the interval 408-547 (MHIASAQVAG…SGCYSAMAIL (140 aa)). Acetyl-CoA is bound by residues 475–477 (IAV) and 482–488 (RRQGIGR).

This sequence belongs to the RNA cytidine acetyltransferase family. TmcA subfamily.

It is found in the cytoplasm. The catalysed reaction is cytidine(34) in elongator tRNA(Met) + acetyl-CoA + ATP + H2O = N(4)-acetylcytidine(34) in elongator tRNA(Met) + ADP + phosphate + CoA + H(+). In terms of biological role, catalyzes the formation of N(4)-acetylcytidine (ac(4)C) at the wobble position of tRNA(Met), by using acetyl-CoA as an acetyl donor and ATP (or GTP). This is tRNA(Met) cytidine acetyltransferase TmcA from Pectobacterium atrosepticum (strain SCRI 1043 / ATCC BAA-672) (Erwinia carotovora subsp. atroseptica).